We begin with the raw amino-acid sequence, 426 residues long: 3-isopropylmalate dehydratase large subunit (426 aa).

[4Fe-4S] cluster-binding residues include Cys307, Cys367, and Cys370.

Belongs to the aconitase/IPM isomerase family. LeuC type 2 subfamily. In terms of assembly, heterodimer of LeuC and LeuD. It depends on [4Fe-4S] cluster as a cofactor.

It catalyses the reaction (2R,3S)-3-isopropylmalate = (2S)-2-isopropylmalate. The protein operates within amino-acid biosynthesis; L-leucine biosynthesis; L-leucine from 3-methyl-2-oxobutanoate: step 2/4. Its function is as follows. Catalyzes the isomerization between 2-isopropylmalate and 3-isopropylmalate, via the formation of 2-isopropylmaleate. This is 3-isopropylmalate dehydratase large subunit from Sulfurovum sp. (strain NBC37-1).